Reading from the N-terminus, the 698-residue chain is Polyribonucleotide nucleotidyltransferase (698 aa).

Mg(2+)-binding residues include Asp485 and Asp491. Residues 552–612 (PRVEMMTIPE…SDLKGAKSIV (61 aa)) form the KH domain. The 69-residue stretch at 622–690 (GMVYDGTVKK…KLGRLNLSYV (69 aa)) folds into the S1 motif domain.

It belongs to the polyribonucleotide nucleotidyltransferase family. Mg(2+) serves as cofactor.

It is found in the cytoplasm. It catalyses the reaction RNA(n+1) + phosphate = RNA(n) + a ribonucleoside 5'-diphosphate. In terms of biological role, involved in mRNA degradation. Catalyzes the phosphorolysis of single-stranded polyribonucleotides processively in the 3'- to 5'-direction. The protein is Polyribonucleotide nucleotidyltransferase of Treponema denticola (strain ATCC 35405 / DSM 14222 / CIP 103919 / JCM 8153 / KCTC 15104).